The sequence spans 425 residues: Trigger factor (425 aa).

The PPIase FKBP-type domain maps to Gly-163–Pro-248.

The protein belongs to the FKBP-type PPIase family. Tig subfamily.

It is found in the cytoplasm. It catalyses the reaction [protein]-peptidylproline (omega=180) = [protein]-peptidylproline (omega=0). Functionally, involved in protein export. Acts as a chaperone by maintaining the newly synthesized protein in an open conformation. Functions as a peptidyl-prolyl cis-trans isomerase. The polypeptide is Trigger factor (Bacillus anthracis (strain A0248)).